A 209-amino-acid chain; its full sequence is Uracil phosphoribosyltransferase (209 aa).

5-phospho-alpha-D-ribose 1-diphosphate is bound by residues Arg-77, Arg-102, and Asp-129–Ser-137. Uracil-binding positions include Ile-192 and Gly-197–Ala-199. Position 198 (Asp-198) interacts with 5-phospho-alpha-D-ribose 1-diphosphate.

This sequence belongs to the UPRTase family. Requires Mg(2+) as cofactor.

It carries out the reaction UMP + diphosphate = 5-phospho-alpha-D-ribose 1-diphosphate + uracil. It functions in the pathway pyrimidine metabolism; UMP biosynthesis via salvage pathway; UMP from uracil: step 1/1. Its activity is regulated as follows. Allosterically activated by GTP. Catalyzes the conversion of uracil and 5-phospho-alpha-D-ribose 1-diphosphate (PRPP) to UMP and diphosphate. This chain is Uracil phosphoribosyltransferase, found in Metamycoplasma hominis (Mycoplasma hominis).